The following is a 1104-amino-acid chain: Extended synaptotagmin-1 (1104 aa).

Methionine 1 carries the N-acetylmethionine modification. Over 1–38 the chain is Cytoplasmic; the sequence is MERSPGEGPSPSPTDQPSAPSDPTGQPPAAHAKPDPGS. The interval 1 to 47 is disordered; the sequence is MERSPGEGPSPSPTDQPSAPSDPTGQPPAAHAKPDPGSGGQPAGPGA. The segment covering 15–24 has biased composition (polar residues); that stretch reads DQPSAPSDPT. The segment covering 37–47 has biased composition (gly residues); the sequence is GSGGQPAGPGA. Residues 39–59 form a helical membrane-spanning segment; sequence GGQPAGPGAAGEALAVLTSFG. Residues 60-62 are Lumenal-facing; sequence KRL. The helical transmembrane segment at 63–83 threads the bilayer; sequence LVLIPVYLAGAVGLSVGFVLF. At 84–1104 the chain is on the cytoplasmic side; it reads GLALYLGWRR…LMDDKDKGSS (1021 aa). Residues 91–116 are a coiled coil; sequence WRRVRDEKERSLRAARQLLDDEEQLT. In terms of domain architecture, SMP-LTD spans 135-313; sequence DVEKAEWLNK…LPNRLLVPLV (179 aa). 4 C2 domains span residues 312-433, 460-580, 627-751, and 777-899; these read LVPD…DDWF, QVLQ…QLSS, SVDA…DEWL, and LEEV…TLNS. Residue serine 324 is modified to Phosphoserine; by CDK5. Ca(2+)-binding residues include lysine 344, aspartate 345, aspartate 357, aspartate 404, aspartate 406, aspartate 408, aspartate 410, and aspartate 411. Disordered stretches follow at residues 617–641, 813–833, and 924–950; these read VDSE…TPDS, RKGT…TSHK, and SHSY…VTSS. Lysine 817 is subject to N6-acetyllysine. Residues serine 820 and serine 941 each carry the phosphoserine modification. A compositionally biased stretch (low complexity) spans 925–946; the sequence is HSYSHSSSSLSEEPELSGGPPH. Residue threonine 948 is modified to Phosphothreonine. Serine 949 and serine 963 each carry phosphoserine. In terms of domain architecture, C2 5 spans 971–1093; the sequence is PLGQVKLTVW…DLSQGVARWY (123 aa). Phosphotyrosine is present on tyrosine 1009. The interval 1018–1025 is required for phosphatidylinositol 4,5-bisphosphate-dependent location at the cell membrane; the sequence is KNRGTKRK. The residue at position 1034 (serine 1034) is a Phosphoserine.

It belongs to the extended synaptotagmin family. As to quaternary structure, interacts with ESYT2 and ESYT3. Interacts with ADGRD1; inhibiting the G-protein-coupled receptor activity of ADGRD1. Interaction with ADGRD1 is abolished when cytosolic calcium increases, relieving ADGRD1 G-protein-coupled receptor activity. Interacts (phosphorylated form) with SLC2A4. In terms of processing, phosphorylated on Ser residues in insulin-treated adipocytes (in vitro); this promotes interaction with SLC2A4.

Its subcellular location is the endoplasmic reticulum membrane. The protein localises to the cell membrane. Functionally, binds calcium (via the C2 domains) and translocates to sites of contact between the endoplasmic reticulum and the cell membrane in response to increased cytosolic calcium levels. Helps tether the endoplasmic reticulum to the cell membrane and promotes the formation of appositions between the endoplasmic reticulum and the cell membrane. Acts as an inhibitor of ADGRD1 G-protein-coupled receptor activity in absence of cytosolic calcium. Binds glycerophospholipids in a barrel-like domain and may play a role in cellular lipid transport. This chain is Extended synaptotagmin-1 (ESYT1), found in Pongo abelii (Sumatran orangutan).